Here is a 181-residue protein sequence, read N- to C-terminus: Probable pyruvoyl-dependent arginine decarboxylase (181 aa).

Residue serine 43 is modified to Pyruvic acid (Ser).

The protein belongs to the PdaD family. Pyruvate is required as a cofactor.

It catalyses the reaction L-arginine + H(+) = agmatine + CO2. This is Probable pyruvoyl-dependent arginine decarboxylase from Chlorobium luteolum (strain DSM 273 / BCRC 81028 / 2530) (Pelodictyon luteolum).